The chain runs to 500 residues: Glycerol kinase (500 aa).

Thr12 lines the ADP pocket. ATP is bound by residues Thr12, Thr13, and Ser14. Residue Thr12 participates in sn-glycerol 3-phosphate binding. An ADP-binding site is contributed by Arg16. 4 residues coordinate sn-glycerol 3-phosphate: Arg82, Glu83, Tyr134, and Asp243. Glycerol is bound by residues Arg82, Glu83, Tyr134, Asp243, and Gln244. The ADP site is built by Thr265 and Gly308. Residues Thr265, Gly308, Gln312, and Gly411 each coordinate ATP. An ADP-binding site is contributed by Gly411.

It belongs to the FGGY kinase family.

The catalysed reaction is glycerol + ATP = sn-glycerol 3-phosphate + ADP + H(+). It participates in polyol metabolism; glycerol degradation via glycerol kinase pathway; sn-glycerol 3-phosphate from glycerol: step 1/1. Inhibited by fructose 1,6-bisphosphate (FBP). In terms of biological role, key enzyme in the regulation of glycerol uptake and metabolism. Catalyzes the phosphorylation of glycerol to yield sn-glycerol 3-phosphate. The polypeptide is Glycerol kinase (Chelativorans sp. (strain BNC1)).